The primary structure comprises 671 residues: Polyadenylate-binding protein 8 (671 aa).

4 consecutive RRM domains span residues 45–123, 133–210, 224–301, and 327–404; these read TSLY…YSVR, GNIF…PFVH, TNVY…KAQK, and SNLY…LAQR. The interval 467-526 is disordered; that stretch reads LVPGMRPGGSPMPNFFMPMMQQGQQQQQQQQQQQRPGGGRRGALPQPQQPSPMMQQQMHP. Low complexity-rich tracts occupy residues 483-501 and 508-525; these read MPMMQQGQQQQQQQQQQQR and GALPQPQQPSPMMQQQMH. Positions 573–650 constitute a PABC domain; the sequence is PIVALATRLA…AMDVLRSVAQ (78 aa).

The protein belongs to the polyadenylate-binding protein type-1 family. Interacts with ERD15/CID1. Interacts with Turnip mosaic virus (TuMV) VPg-Pro and RNA-dependent RNA polymerase (RdRp). As to expression, expressed predominantly in immature flowers.

It is found in the cytoplasm. The protein localises to the nucleus. Functionally, binds the poly(A) tail of mRNA. Appears to be an important mediator of the multiple roles of the poly(A) tail in mRNA biogenesis, stability and translation. During infection with potyvirus TuMV, acts as a potential integral component of the viral replicase complex that could play an important role in the regulation of potyviral RNA-dependent RNA polymerase (RdRp). The chain is Polyadenylate-binding protein 8 (PAB8) from Arabidopsis thaliana (Mouse-ear cress).